Reading from the N-terminus, the 275-residue chain is MASSNLLSLALFLVLLTHANSASQTSFSFQRFNETNLILQRDATVSSKGQLRLTNVNDNGEPTLSSLGRAFYSAPIQIWDNTTGAVAASPTSFTFNIDVPNNSGPADGLAFVLLPVGSQPKDKGGLLGLFNNYKYDSNAHTVAVEFDTLYNVHWDPKPRHIGIDVNSIKSIKTTTWDFVKGENAEVLITYDSSTKLLVASLVYPSLKTSFIVSDTVDLKSVLPEWVIVGFTATTGITKGNVETNDILSWSFASKLSDGTTSEALNLANFALNQIL.

The N-terminal stretch at 1–21 (MASSNLLSLALFLVLLTHANS) is a signal peptide. Asn33 carries an N-linked (GlcNAc...) (high mannose) asparagine glycan. Residues Asn81 and Asn101 are each glycosylated (N-linked (GlcNAc...) asparagine).

It belongs to the leguminous lectin family.

Functionally, this insecticidal carbohydrate-binding lectin is toxic for the cowpea weevil. The polypeptide is Erythroagglutinating phytohemagglutinin (DLEC1) (Phaseolus vulgaris (Kidney bean)).